A 194-amino-acid polypeptide reads, in one-letter code: Imidazoleglycerol-phosphate dehydratase (194 aa).

Belongs to the imidazoleglycerol-phosphate dehydratase family.

It is found in the cytoplasm. The enzyme catalyses D-erythro-1-(imidazol-4-yl)glycerol 3-phosphate = 3-(imidazol-4-yl)-2-oxopropyl phosphate + H2O. It functions in the pathway amino-acid biosynthesis; L-histidine biosynthesis; L-histidine from 5-phospho-alpha-D-ribose 1-diphosphate: step 6/9. This Bacillus cereus (strain AH187) protein is Imidazoleglycerol-phosphate dehydratase.